The chain runs to 304 residues: Protease HtpX homolog (304 aa).

The next 2 membrane-spanning stretches (helical) occupy residues 14 to 34 and 39 to 59; these read VFII…IGII and YLNG…IMVM. His-144 is a binding site for Zn(2+). Glu-145 is an active-site residue. His-148 is a binding site for Zn(2+). 2 helical membrane passes run 159–179 and 202–222; these read IAIA…RLIF and IIIY…ATAI. Residue Glu-231 coordinates Zn(2+). The interval 275–304 is disordered; the sequence is SSPLKSKKDKPGLFDSHPPISSRIERLENM.

Belongs to the peptidase M48B family. It depends on Zn(2+) as a cofactor.

The protein resides in the cell membrane. This is Protease HtpX homolog from Listeria innocua serovar 6a (strain ATCC BAA-680 / CLIP 11262).